The chain runs to 499 residues: Dual specificity protein kinase CLK2 (499 aa).

The segment at 1–67 (MPHPRRYHSS…SYDDRSSDRR (67 aa)) is disordered. A compositionally biased stretch (basic and acidic residues) spans 8–21 (HSSERGSRGSYREH). Positions 22–33 (YRSRKHKRRRSR) are enriched in basic residues. Ser34 is subject to Phosphoserine; by PKB/AKT1. Residues 47–67 (REDSYHVRSRSSYDDRSSDRR) are compositionally biased toward basic and acidic residues. Ser98 is subject to Phosphoserine. Tyr99 bears the Phosphotyrosine; by autocatalysis mark. Residues 101–143 (YQRENSSYRSQRSSRRKHRRRRRRSRTFSRSSSQHSSRRAKSV) form a disordered region. Residues 112 to 127 (RSSRRKHRRRRRRSRT) are compositionally biased toward basic residues. Thr127 carries the post-translational modification Phosphothreonine; by PKB/AKT1. The residue at position 142 (Ser142) is a Phosphoserine; by autocatalysis. At Tyr153 the chain carries Phosphotyrosine. In terms of domain architecture, Protein kinase spans 163–479 (YEIVSTLGEG…LGEALQHPFF (317 aa)). ATP-binding positions include 169-177 (LGEGTFGRV) and Lys193. The active-site Proton acceptor is Asp290. Thr344 bears the Phosphothreonine; by PKB/AKT2 mark.

This sequence belongs to the protein kinase superfamily. CMGC Ser/Thr protein kinase family. Lammer subfamily. As to quaternary structure, interacts with RBMX. Interacts with AKT1 and UBL5. Post-translationally, autophosphorylates on all three types of residues. Phosphorylation on Ser-34 and Thr-127 by AKT1 is induced by ionizing radiation or insulin. Phosphorylation plays a critical role in cell proliferation following low dose radiation and prevents cell death following high dose radiation. Phosphorylation at Thr-344 by PKB/AKT2 induces its kinase activity which is required for its stability. The phosphorylation status at Ser-142 influences its subnuclear localization; inhibition of phosphorylation at Ser-142 results in accumulation in the nuclear speckle. As to expression, endothelial cells. Expressed in androgen-dependent prostate cancer cells.

It is found in the nucleus. The protein resides in the nucleus speckle. The enzyme catalyses L-seryl-[protein] + ATP = O-phospho-L-seryl-[protein] + ADP + H(+). The catalysed reaction is L-threonyl-[protein] + ATP = O-phospho-L-threonyl-[protein] + ADP + H(+). It catalyses the reaction L-tyrosyl-[protein] + ATP = O-phospho-L-tyrosyl-[protein] + ADP + H(+). Its activity is regulated as follows. 5,6-dichloro-1-b-D-ribofuranosylbenzimidazole (DRB) inhibits autophosphorylation. TG003 inhibits its kinase activity and affects the regulation of alternative splicing mediated by phosphorylation of SR proteins. Dual specificity kinase acting on both serine/threonine and tyrosine-containing substrates. Phosphorylates serine- and arginine-rich (SR) proteins of the spliceosomal complex. May be a constituent of a network of regulatory mechanisms that enable SR proteins to control RNA splicing and can cause redistribution of SR proteins from speckles to a diffuse nucleoplasmic distribution. Acts as a suppressor of hepatic gluconeogenesis and glucose output by repressing PPARGC1A transcriptional activity on gluconeogenic genes via its phosphorylation. Phosphorylates PPP2R5B thereby stimulating the assembly of PP2A phosphatase with the PPP2R5B-AKT1 complex leading to dephosphorylation of AKT1. Phosphorylates: PTPN1, SRSF1 and SRSF3. Regulates the alternative splicing of tissue factor (F3) pre-mRNA in endothelial cells. Phosphorylates PAGE4 at several serine and threonine residues and this phosphorylation attenuates the ability of PAGE4 to potentiate the transcriptional activator activity of JUN. This Homo sapiens (Human) protein is Dual specificity protein kinase CLK2 (CLK2).